The primary structure comprises 728 residues: Catalase-peroxidase (728 aa).

A cross-link (tryptophyl-tyrosyl-methioninium (Trp-Tyr) (with M-244)) is located at residues 91–218 (WHSAGTYRTA…LAAVQMGLIY (128 aa)). The Proton acceptor role is filled by His-92. The segment at residues 218-244 (YVNPEGPDGNPDPVAAARDIRDTFARM) is a cross-link (tryptophyl-tyrosyl-methioninium (Tyr-Met) (with W-91)). His-259 lines the heme b pocket.

This sequence belongs to the peroxidase family. Peroxidase/catalase subfamily. In terms of assembly, homodimer or homotetramer. Heme b is required as a cofactor. In terms of processing, formation of the three residue Trp-Tyr-Met cross-link is important for the catalase, but not the peroxidase activity of the enzyme.

It catalyses the reaction H2O2 + AH2 = A + 2 H2O. The enzyme catalyses 2 H2O2 = O2 + 2 H2O. Functionally, bifunctional enzyme with both catalase and broad-spectrum peroxidase activity. The sequence is that of Catalase-peroxidase from Burkholderia mallei (strain NCTC 10247).